We begin with the raw amino-acid sequence, 334 residues long: MEAAHFFEGTEKLLEVWFSRQQSDASQGSGDLRTIPRSEWDVLLKDVQCSIISVTKTDKQEAYVLSESSMFVSKRRFILKTCGTTLLLKALVPLLKLARDYSGFDSIQSFFYSRKNFMKPSHQGYPHRNFQEEIEFLNAIFPNGAAYCMGRMNSDCWYLYTLDFPESRVISQPDQTLEILMSELDPAVMDQFYMKDGVTAKDVTRESGIRDLIPGSVIDATLFNPCGYSMNGMKSDGTYWTIHITPEPEFSYVSFETNLSQTSYDDLIRKVVEVFKPGKFVTTLFVNQSSKCRTVLSSPQKIDGFKRLDCQSAMFNDYNFVFTSFAKKQQQQQS.

Phe7 provides a ligand contact to substrate. Active-site residues include Glu8 and Glu11. Glu67 lines the substrate pocket. Ser68 acts as the Schiff-base intermediate with substrate; via pyruvic acid in catalysis. Pyruvic acid (Ser); by autocatalysis is present on Ser68. Cys82 acts as the Proton donor; for catalytic activity in catalysis. Position 223 (Phe223) interacts with substrate. Residues Ser229 and His243 each act as proton acceptor; for processing activity in the active site. Glu247 is a substrate binding site. At Ser298 the chain carries Phosphoserine.

The protein belongs to the eukaryotic AdoMetDC family. As to quaternary structure, heterotetramer of two alpha and two beta chains. Requires pyruvate as cofactor. Post-translationally, is synthesized initially as an inactive proenzyme. Formation of the active enzyme involves a self-maturation process in which the active site pyruvoyl group is generated from an internal serine residue via an autocatalytic post-translational modification. Two non-identical subunits are generated from the proenzyme in this reaction, and the pyruvate is formed at the N-terminus of the alpha chain, which is derived from the carboxyl end of the proenzyme. The post-translation cleavage follows an unusual pathway, termed non-hydrolytic serinolysis, in which the side chain hydroxyl group of the serine supplies its oxygen atom to form the C-terminus of the beta chain, while the remainder of the serine residue undergoes an oxidative deamination to produce ammonia and the pyruvoyl group blocking the N-terminus of the alpha chain. In terms of tissue distribution, expressed in embryonic stem cells; subsequently down-regulated in differentiating neural precursor cells.

It carries out the reaction S-adenosyl-L-methionine + H(+) = S-adenosyl 3-(methylsulfanyl)propylamine + CO2. Its pathway is amine and polyamine biosynthesis; S-adenosylmethioninamine biosynthesis; S-adenosylmethioninamine from S-adenosyl-L-methionine: step 1/1. Functionally, essential for biosynthesis of the polyamines spermidine and spermine. Promotes maintenance and self-renewal of embryonic stem cells, by maintaining spermine levels. The protein is S-adenosylmethionine decarboxylase proenzyme 1 (Amd1) of Mus musculus (Mouse).